The primary structure comprises 188 residues: Elongation factor P (188 aa).

Lys-34 carries the N6-(3,6-diaminohexanoyl)-5-hydroxylysine modification.

The protein belongs to the elongation factor P family. Post-translationally, may be beta-lysylated on the epsilon-amino group of Lys-34 by the combined action of EpmA and EpmB, and then hydroxylated on the C5 position of the same residue by EpmC (if this protein is present). Lysylation is critical for the stimulatory effect of EF-P on peptide-bond formation. The lysylation moiety may extend toward the peptidyltransferase center and stabilize the terminal 3-CCA end of the tRNA. Hydroxylation of the C5 position on Lys-34 may allow additional potential stabilizing hydrogen-bond interactions with the P-tRNA.

Its subcellular location is the cytoplasm. It functions in the pathway protein biosynthesis; polypeptide chain elongation. Functionally, involved in peptide bond synthesis. Alleviates ribosome stalling that occurs when 3 or more consecutive Pro residues or the sequence PPG is present in a protein, possibly by augmenting the peptidyl transferase activity of the ribosome. Modification of Lys-34 is required for alleviation. The chain is Elongation factor P from Actinobacillus pleuropneumoniae serotype 5b (strain L20).